The following is a 115-amino-acid chain: UPF0235 protein CTA_0423 (115 aa).

Belongs to the UPF0235 family.

This Chlamydia trachomatis serovar A (strain ATCC VR-571B / DSM 19440 / HAR-13) protein is UPF0235 protein CTA_0423.